The primary structure comprises 200 residues: Casparian strip membrane protein 2 (200 aa).

Residues 1-37 (MMKSDSVAIDVPESSSVAKRKAPFMANIRDENGGYKK) lie on the Cytoplasmic side of the membrane. A helical membrane pass occupies residues 38–58 (GLAIFDFILRLGAIAAALGAA). Residues 59–88 (STMGTSDETLPFFTQFFQFNAGYDDFPTFQ) are Extracellular-facing. The helical transmembrane segment at 89–109 (FFVIAMAMVAGYLVLSLPFSI) threads the bilayer. At 110 to 121 (VSICRPHAAGPR) the chain is on the cytoplasmic side. A helical membrane pass occupies residues 122-142 (ILLFILDTVALTLNAAAGAAA). Residues 143–175 (ADIVYLAHNGNQTTNWLAICLQFGDFCREVSGS) lie on the Extracellular side of the membrane. A glycan (N-linked (GlcNAc...) asparagine) is linked at N153. The helical transmembrane segment at 176–196 (VVASFASVVILMVLVVMSGLA) threads the bilayer. At 197–200 (LRRY) the chain is on the cytoplasmic side.

This sequence belongs to the Casparian strip membrane proteins (CASP) family. In terms of assembly, homodimer and heterodimers.

The protein resides in the cell membrane. In terms of biological role, regulates membrane-cell wall junctions and localized cell wall deposition. Required for establishment of the Casparian strip membrane domain (CSD) and the subsequent formation of Casparian strips, a cell wall modification of the root endodermis that determines an apoplastic barrier between the intraorganismal apoplasm and the extraorganismal apoplasm and prevents lateral diffusion. The chain is Casparian strip membrane protein 2 from Ricinus communis (Castor bean).